Here is a 329-residue protein sequence, read N- to C-terminus: Holliday junction branch migration complex subunit RuvB (329 aa).

Residues 1–20 are disordered; the sequence is MSRILEGDPVEGEKSWENEL. The segment at 1-181 is large ATPase domain (RuvB-L); sequence MSRILEGDPV…FGIVERLQFY (181 aa). Positions 11-20 are enriched in basic and acidic residues; sequence EGEKSWENEL. ATP-binding positions include leucine 20, arginine 21, glycine 62, lysine 65, threonine 66, threonine 67, 128–130, arginine 171, tyrosine 181, and arginine 218; that span reads EDY. Threonine 66 contributes to the Mg(2+) binding site. Residues 182 to 252 are small ATPAse domain (RuvB-S); it reads DKDALRQILM…IAVYALNQLG (71 aa). The interval 255–329 is head domain (RuvB-H); sequence QYGLDLMDRR…FAKSSVLADK (75 aa). Arginine 291, lysine 310, and arginine 315 together coordinate DNA.

Belongs to the RuvB family. As to quaternary structure, homohexamer. Forms an RuvA(8)-RuvB(12)-Holliday junction (HJ) complex. HJ DNA is sandwiched between 2 RuvA tetramers; dsDNA enters through RuvA and exits via RuvB. An RuvB hexamer assembles on each DNA strand where it exits the tetramer. Each RuvB hexamer is contacted by two RuvA subunits (via domain III) on 2 adjacent RuvB subunits; this complex drives branch migration. In the full resolvosome a probable DNA-RuvA(4)-RuvB(12)-RuvC(2) complex forms which resolves the HJ.

Its subcellular location is the cytoplasm. The enzyme catalyses ATP + H2O = ADP + phosphate + H(+). The RuvA-RuvB-RuvC complex processes Holliday junction (HJ) DNA during genetic recombination and DNA repair, while the RuvA-RuvB complex plays an important role in the rescue of blocked DNA replication forks via replication fork reversal (RFR). RuvA specifically binds to HJ cruciform DNA, conferring on it an open structure. The RuvB hexamer acts as an ATP-dependent pump, pulling dsDNA into and through the RuvAB complex. RuvB forms 2 homohexamers on either side of HJ DNA bound by 1 or 2 RuvA tetramers; 4 subunits per hexamer contact DNA at a time. Coordinated motions by a converter formed by DNA-disengaged RuvB subunits stimulates ATP hydrolysis and nucleotide exchange. Immobilization of the converter enables RuvB to convert the ATP-contained energy into a lever motion, pulling 2 nucleotides of DNA out of the RuvA tetramer per ATP hydrolyzed, thus driving DNA branch migration. The RuvB motors rotate together with the DNA substrate, which together with the progressing nucleotide cycle form the mechanistic basis for DNA recombination by continuous HJ branch migration. Branch migration allows RuvC to scan DNA until it finds its consensus sequence, where it cleaves and resolves cruciform DNA. The sequence is that of Holliday junction branch migration complex subunit RuvB from Bdellovibrio bacteriovorus (strain ATCC 15356 / DSM 50701 / NCIMB 9529 / HD100).